A 229-amino-acid chain; its full sequence is Large ribosomal subunit protein uL1 (229 aa).

This sequence belongs to the universal ribosomal protein uL1 family. In terms of assembly, part of the 50S ribosomal subunit.

Its function is as follows. Binds directly to 23S rRNA. The L1 stalk is quite mobile in the ribosome, and is involved in E site tRNA release. Protein L1 is also a translational repressor protein, it controls the translation of the L11 operon by binding to its mRNA. In Actinobacillus succinogenes (strain ATCC 55618 / DSM 22257 / CCUG 43843 / 130Z), this protein is Large ribosomal subunit protein uL1.